Reading from the N-terminus, the 464-residue chain is Elongation factor 1-alpha (464 aa).

One can recognise a tr-type G domain in the interval 5–242; that stretch reads KTHINIVVIG…DSVVPPQRPT (238 aa). GTP-binding positions include 14-21, 91-95, and 153-156; these read GHVDSGKS, DAPGH, and NKMD. 2 positions are modified to 5-glutamyl glycerylphosphorylethanolamine: Glu301 and Glu374.

This sequence belongs to the TRAFAC class translation factor GTPase superfamily. Classic translation factor GTPase family. EF-Tu/EF-1A subfamily.

The protein localises to the cytoplasm. Functionally, this protein promotes the GTP-dependent binding of aminoacyl-tRNA to the A-site of ribosomes during protein biosynthesis. The polypeptide is Elongation factor 1-alpha (Onchocerca volvulus).